The sequence spans 224 residues: Small ribosomal subunit protein uS7 (224 aa).

This sequence belongs to the universal ribosomal protein uS7 family. As to quaternary structure, part of the 30S ribosomal subunit.

In terms of biological role, one of the primary rRNA binding proteins, it binds directly to 16S rRNA where it nucleates assembly of the head domain of the 30S subunit. Is located at the subunit interface close to the decoding center. This chain is Small ribosomal subunit protein uS7, found in Caldivirga maquilingensis (strain ATCC 700844 / DSM 13496 / JCM 10307 / IC-167).